The chain runs to 496 residues: UDP-glycosyltransferase 84A2 (496 aa).

Histidine 23 serves as the catalytic Proton acceptor. Residue histidine 23 coordinates an anthocyanidin. Glutamine 352, histidine 367, tryptophan 370, asparagine 371, serine 372, and glutamate 375 together coordinate UDP-alpha-D-glucose. An an anthocyanidin-binding site is contributed by glycine 390. UDP-alpha-D-glucose-binding residues include aspartate 391 and glutamine 392.

It belongs to the UDP-glycosyltransferase family. Expressed in roots, cotyledons, leaf veins and trichomes.

The catalysed reaction is (E)-sinapate + UDP-alpha-D-glucose = 1-O-(trans-sinapoyl)-beta-D-glucose + UDP. Its function is as follows. Sinapate glucosyltransferase (SGT) required for the biosynthesis of the glucose ester sinapoylglucose and subsequently sinapoylmalate and sinapoylcholine. Is the major SGT activity in plant. Plays an important role in sinapoylation of anthocyanins. Sinapoylglucose produced by UGT84A2 is a significant source of sinapoyl moieties for anthocyanins. Indole-3-butyric acid (IBA)-specific glucosyltransferase that catalyzes the glucosylation of the auxin IBA, but not indole-3-acetic acid (IAA). May be involved in flowering regulation through IBA-mediated transcriptional repression of the auxin-response factors ARF6 and ARF8 and downstream flowering pathway genes. Can glucosylate the phytotoxic xenobiotic compound 2,4,5-trichlorophenol (TCP). This Arabidopsis thaliana (Mouse-ear cress) protein is UDP-glycosyltransferase 84A2.